A 348-amino-acid polypeptide reads, in one-letter code: MGTVEKQNLILAFESSCDETSVAVIKDGHEILSNVIATQINSHKRFGGVVPEVASRHHIEQITICIEAALQEAHVTYADLDAVAVTYGPGLVGALLVGVNAAKTVAYAHQLPLIPVNHMAGHIYAARFVKPFEFPLMALLVSGGHTELVYMQADGQFEIIGETRDDAAGEAYDKIGRVLGVPYPAGKVIDEMAHAGHDTFKFPRAMIDEDNYDFSFSGLKSAFINTVHHADQIGATLDKNDLAASFQASVVDVLMSKTLRVLKQYPVKQLVLAGGVAANQGLRERLQQDLPAAFPDTELILAPLKLCGDNGAMIGAAGYVQYQHHQFGDATLNADPSLEFDWMPGMLK.

Fe cation contacts are provided by His118 and His122. Substrate-binding positions include 140–144, Asp173, Gly186, Asp190, and Asn279; that span reads LVSGG. Position 309 (Asp309) interacts with Fe cation.

The protein belongs to the KAE1 / TsaD family. The cofactor is Fe(2+).

The protein localises to the cytoplasm. The enzyme catalyses L-threonylcarbamoyladenylate + adenosine(37) in tRNA = N(6)-L-threonylcarbamoyladenosine(37) in tRNA + AMP + H(+). Required for the formation of a threonylcarbamoyl group on adenosine at position 37 (t(6)A37) in tRNAs that read codons beginning with adenine. Is involved in the transfer of the threonylcarbamoyl moiety of threonylcarbamoyl-AMP (TC-AMP) to the N6 group of A37, together with TsaE and TsaB. TsaD likely plays a direct catalytic role in this reaction. This Lactiplantibacillus plantarum (strain ATCC BAA-793 / NCIMB 8826 / WCFS1) (Lactobacillus plantarum) protein is tRNA N6-adenosine threonylcarbamoyltransferase.